The chain runs to 472 residues: ATP synthase subunit beta (472 aa).

160 to 167 (GGAGVGKT) is a binding site for ATP.

It belongs to the ATPase alpha/beta chains family. As to quaternary structure, F-type ATPases have 2 components, CF(1) - the catalytic core - and CF(0) - the membrane proton channel. CF(1) has five subunits: alpha(3), beta(3), gamma(1), delta(1), epsilon(1). CF(0) has three main subunits: a(1), b(2) and c(9-12). The alpha and beta chains form an alternating ring which encloses part of the gamma chain. CF(1) is attached to CF(0) by a central stalk formed by the gamma and epsilon chains, while a peripheral stalk is formed by the delta and b chains.

It localises to the cell membrane. It carries out the reaction ATP + H2O + 4 H(+)(in) = ADP + phosphate + 5 H(+)(out). Produces ATP from ADP in the presence of a proton gradient across the membrane. The catalytic sites are hosted primarily by the beta subunits. This chain is ATP synthase subunit beta, found in Lachnoclostridium phytofermentans (strain ATCC 700394 / DSM 18823 / ISDg) (Clostridium phytofermentans).